The sequence spans 350 residues: Probable poly-beta-1,6-N-acetyl-D-glucosamine export protein (350 aa).

10 consecutive transmembrane segments (helical) span residues 7-29 (ELVYLRAIICAIIIITHLLTQIT), 44-66 (FYIRNIVIFGTPCFIILSQLLTT), 79-101 (TRVKYILIPYILMGLFYSYSESL), 116-138 (LLGQWYGYFIVVIMQFFILSYII), 145-167 (LFNSKILLLLSFILQQSFLYYFT), 187-204 (IIFGWIFYFFLGAYMGYN), 211-233 (FLERYLVIMIVLAVATYFVFIAL), 243-262 (SFSYSLTPYNSIMFIVILGI), 269-291 (ILFNTIQMISAFSFFIYLLHPII), and 306-328 (TMVFLAISLLFILGLCIGVGMIL).

It belongs to the acyltransferase 3 family.

The protein localises to the cell membrane. Functionally, presumably involved in the export of the biofilm adhesin polysaccharide poly-beta-1,6-N-acetyl-D-glucosamine (PNAG, also referred to as PIA) across the cell membrane. This Staphylococcus aureus (strain Mu50 / ATCC 700699) protein is Probable poly-beta-1,6-N-acetyl-D-glucosamine export protein (icaC).